The primary structure comprises 863 residues: Aminopeptidase N (863 aa).

Substrate contacts are provided by residues Glu124 and 263–267 (GAMEN). Zn(2+) is bound at residue His299. The active-site Proton acceptor is Glu300. Positions 303 and 322 each coordinate Zn(2+).

Belongs to the peptidase M1 family. Zn(2+) serves as cofactor.

It carries out the reaction Release of an N-terminal amino acid, Xaa-|-Yaa- from a peptide, amide or arylamide. Xaa is preferably Ala, but may be most amino acids including Pro (slow action). When a terminal hydrophobic residue is followed by a prolyl residue, the two may be released as an intact Xaa-Pro dipeptide.. Functionally, aminopeptidase N is involved in the degradation of intracellular peptides generated by protein breakdown during normal growth as well as in response to nutrient starvation. In Caulobacter vibrioides (strain ATCC 19089 / CIP 103742 / CB 15) (Caulobacter crescentus), this protein is Aminopeptidase N (pepN).